A 313-amino-acid polypeptide reads, in one-letter code: Ribosomal RNA small subunit methyltransferase H (313 aa).

Residues 35-37 (GGH), Asp55, Phe80, Asp102, and Gln109 contribute to the S-adenosyl-L-methionine site.

The protein belongs to the methyltransferase superfamily. RsmH family.

It localises to the cytoplasm. The enzyme catalyses cytidine(1402) in 16S rRNA + S-adenosyl-L-methionine = N(4)-methylcytidine(1402) in 16S rRNA + S-adenosyl-L-homocysteine + H(+). Its function is as follows. Specifically methylates the N4 position of cytidine in position 1402 (C1402) of 16S rRNA. This chain is Ribosomal RNA small subunit methyltransferase H, found in Shewanella loihica (strain ATCC BAA-1088 / PV-4).